Consider the following 195-residue polypeptide: Endoribonuclease YbeY (195 aa).

Zn(2+) is bound by residues histidine 152, histidine 156, and histidine 162.

The protein belongs to the endoribonuclease YbeY family. Requires Zn(2+) as cofactor.

It localises to the cytoplasm. Its function is as follows. Single strand-specific metallo-endoribonuclease involved in late-stage 70S ribosome quality control and in maturation of the 3' terminus of the 16S rRNA. In Rhodopseudomonas palustris (strain BisB5), this protein is Endoribonuclease YbeY.